The following is a 389-amino-acid chain: LL-diaminopimelate aminotransferase (389 aa).

Residues Tyr-16 and Gly-41 each contribute to the substrate site. Residues Tyr-70, 104 to 105 (SK), Tyr-129, Asn-179, Tyr-210, and 239 to 241 (SLS) contribute to the pyridoxal 5'-phosphate site. Substrate contacts are provided by Lys-105, Tyr-129, and Asn-179. Lys-242 is modified (N6-(pyridoxal phosphate)lysine). Position 250 (Arg-250) interacts with pyridoxal 5'-phosphate. Arg-369 lines the substrate pocket.

It belongs to the class-I pyridoxal-phosphate-dependent aminotransferase family. LL-diaminopimelate aminotransferase subfamily. In terms of assembly, homodimer. Pyridoxal 5'-phosphate is required as a cofactor.

It carries out the reaction (2S,6S)-2,6-diaminopimelate + 2-oxoglutarate = (S)-2,3,4,5-tetrahydrodipicolinate + L-glutamate + H2O + H(+). It participates in amino-acid biosynthesis; L-lysine biosynthesis via DAP pathway; LL-2,6-diaminopimelate from (S)-tetrahydrodipicolinate (aminotransferase route): step 1/1. Its function is as follows. Involved in the synthesis of meso-diaminopimelate (m-DAP or DL-DAP), required for both lysine and peptidoglycan biosynthesis. Catalyzes the direct conversion of tetrahydrodipicolinate to LL-diaminopimelate. The polypeptide is LL-diaminopimelate aminotransferase (Nitratidesulfovibrio vulgaris (strain DSM 19637 / Miyazaki F) (Desulfovibrio vulgaris)).